We begin with the raw amino-acid sequence, 448 residues long: Homogentisate 1,2-dioxygenase (448 aa).

The active-site Proton acceptor is the H303. Residues H346 and E352 each coordinate Fe cation. Homogentisate is bound by residues Y361 and H382. Position 382 (H382) interacts with Fe cation.

It belongs to the homogentisate dioxygenase family. As to quaternary structure, hexamer; dimer of trimers. It depends on Fe cation as a cofactor.

It catalyses the reaction homogentisate + O2 = 4-maleylacetoacetate + H(+). It functions in the pathway amino-acid degradation; L-phenylalanine degradation; acetoacetate and fumarate from L-phenylalanine: step 4/6. Involved in the catabolism of homogentisate (2,5-dihydroxyphenylacetate or 2,5-OH-PhAc), a central intermediate in the degradation of phenylalanine and tyrosine. Catalyzes the oxidative ring cleavage of the aromatic ring of homogentisate to yield maleylacetoacetate. This is Homogentisate 1,2-dioxygenase from Bradyrhizobium diazoefficiens (strain JCM 10833 / BCRC 13528 / IAM 13628 / NBRC 14792 / USDA 110).